Here is a 163-residue protein sequence, read N- to C-terminus: Peptidyl-prolyl cis-trans isomerase (163 aa).

Positions 17–163 (KTAYATIKTN…IESVVFSSSL (147 aa)) constitute a PPIase cyclophilin-type domain.

The protein belongs to the cyclophilin-type PPIase family.

It carries out the reaction [protein]-peptidylproline (omega=180) = [protein]-peptidylproline (omega=0). Functionally, PPIases accelerate the folding of proteins. It catalyzes the cis-trans isomerization of proline imidic peptide bonds in oligopeptides. The polypeptide is Peptidyl-prolyl cis-trans isomerase (ppiA) (Helicobacter pylori (strain ATCC 700392 / 26695) (Campylobacter pylori)).